The chain runs to 184 residues: Ribosome-recycling factor (184 aa).

This sequence belongs to the RRF family.

It localises to the cytoplasm. Functionally, responsible for the release of ribosomes from messenger RNA at the termination of protein biosynthesis. May increase the efficiency of translation by recycling ribosomes from one round of translation to another. The polypeptide is Ribosome-recycling factor (Borrelia garinii subsp. bavariensis (strain ATCC BAA-2496 / DSM 23469 / PBi) (Borreliella bavariensis)).